Here is a 332-residue protein sequence, read N- to C-terminus: Glycerol-3-phosphate dehydrogenase [NAD(P)+] (332 aa).

NADPH contacts are provided by Ser11, Trp12, Arg32, Arg33, and Lys106. Sn-glycerol 3-phosphate contacts are provided by Lys106 and Gly136. Ala140 provides a ligand contact to NADPH. Positions 191, 244, 254, 255, and 256 each coordinate sn-glycerol 3-phosphate. The Proton acceptor role is filled by Lys191. Position 255 (Arg255) interacts with NADPH. Residues Val280 and Glu282 each coordinate NADPH.

The protein belongs to the NAD-dependent glycerol-3-phosphate dehydrogenase family.

It localises to the cytoplasm. The enzyme catalyses sn-glycerol 3-phosphate + NAD(+) = dihydroxyacetone phosphate + NADH + H(+). It catalyses the reaction sn-glycerol 3-phosphate + NADP(+) = dihydroxyacetone phosphate + NADPH + H(+). It participates in membrane lipid metabolism; glycerophospholipid metabolism. Its function is as follows. Catalyzes the reduction of the glycolytic intermediate dihydroxyacetone phosphate (DHAP) to sn-glycerol 3-phosphate (G3P), the key precursor for phospholipid synthesis. The polypeptide is Glycerol-3-phosphate dehydrogenase [NAD(P)+] (Corynebacterium kroppenstedtii (strain DSM 44385 / JCM 11950 / CIP 105744 / CCUG 35717)).